The sequence spans 316 residues: Glutathione synthetase (316 aa).

The ATP-grasp domain occupies 124 to 311; it reads NEKLAALLFP…IAGLLFDAIE (188 aa). 151–208 is a binding site for ATP; it reads FVLEHGQAVLKPLDGMGGRSIFRSGSGDPNLNVILETLTDGNRKLTLAQRFIPDITAG. Mg(2+) is bound by residues Glu-282 and Asn-284.

Belongs to the prokaryotic GSH synthase family. Requires Mg(2+) as cofactor. Mn(2+) is required as a cofactor.

It catalyses the reaction gamma-L-glutamyl-L-cysteine + glycine + ATP = glutathione + ADP + phosphate + H(+). The protein operates within sulfur metabolism; glutathione biosynthesis; glutathione from L-cysteine and L-glutamate: step 2/2. The sequence is that of Glutathione synthetase from Xanthomonas axonopodis pv. citri (strain 306).